A 116-amino-acid chain; its full sequence is MGELPPQVQNLVAQLQQLQQQLQAVITQRAQVEALLRDTEQALEELQKVDDETPVYKAVGNILVKEKKEDVIKELTEKKETYEIRIKTLQRQEEKLRERFAETQQKLQNLLSPQAG.

Belongs to the prefoldin subunit beta family. In terms of assembly, heterohexamer of two alpha and four beta subunits.

The protein localises to the cytoplasm. Its function is as follows. Molecular chaperone capable of stabilizing a range of proteins. Seems to fulfill an ATP-independent, HSP70-like function in archaeal de novo protein folding. This is Prefoldin subunit beta (pfdB) from Archaeoglobus fulgidus (strain ATCC 49558 / DSM 4304 / JCM 9628 / NBRC 100126 / VC-16).